Here is a 225-residue protein sequence, read N- to C-terminus: UPF0758 protein BCQ_4241 (225 aa).

The region spanning 103-225 (SIRSPEDCAR…FVSLKEKGHI (123 aa)) is the MPN domain. Zn(2+) contacts are provided by H174, H176, and D187. Positions 174 to 187 (HNHPSGDPAPSRED) match the JAMM motif motif.

This sequence belongs to the UPF0758 family.

This Bacillus cereus (strain Q1) protein is UPF0758 protein BCQ_4241.